Here is a 100-residue protein sequence, read N- to C-terminus: Ubiquitin-related modifier 1 homolog (100 aa).

Residue Gly-100 is modified to 1-thioglycine. Gly-100 participates in a covalent cross-link: Glycyl lysine isopeptide (Gly-Lys) (interchain with K-? in acceptor proteins).

It belongs to the URM1 family. Post-translationally, C-terminal thiocarboxylation occurs in 2 steps, it is first acyl-adenylated (-COAMP) via the hesA/moeB/thiF part of the MOCS3 homolog, then thiocarboxylated (-COSH) via the rhodanese domain of the MOCS3 homolog.

Its subcellular location is the cytoplasm. It functions in the pathway tRNA modification; 5-methoxycarbonylmethyl-2-thiouridine-tRNA biosynthesis. Acts as a sulfur carrier required for 2-thiolation of mcm(5)S(2)U at tRNA wobble positions of cytosolic tRNA(Lys), tRNA(Glu) and tRNA(Gln). Serves as sulfur donor in tRNA 2-thiolation reaction by being thiocarboxylated (-COSH) at its C-terminus by MOCS3. The sulfur is then transferred to tRNA to form 2-thiolation of mcm(5)S(2)U. Also acts as a ubiquitin-like protein (UBL) that is covalently conjugated via an isopeptide bond to lysine residues of target proteins. The thiocarboxylated form serves as substrate for conjugation and oxidative stress specifically induces the formation of UBL-protein conjugates. This Caenorhabditis elegans protein is Ubiquitin-related modifier 1 homolog.